The chain runs to 150 residues: UPF0178 protein PP_5221 (150 aa).

This sequence belongs to the UPF0178 family.

This is UPF0178 protein PP_5221 from Pseudomonas putida (strain ATCC 47054 / DSM 6125 / CFBP 8728 / NCIMB 11950 / KT2440).